The following is a 243-amino-acid chain: ATP synthase subunit a (243 aa).

The next 7 membrane-spanning stretches (helical) occupy residues 29 to 49, 54 to 74, 89 to 109, 114 to 134, 144 to 164, 182 to 202, and 208 to 228; these read NASLFMVLSTLIISLFCYIGL, ILPNSMQLIIEAIYNFIVSTI, VFTIFTFIATCNLLGVLPLGF, HIAVTFAISMVVFISVTAIGF, ILLPKGTPGWLAPMMVFIELF, IAGHTIIKVIAGFVIKMNIFL, and AFIIILIGFEIFVAILQAYIF.

It belongs to the ATPase A chain family. In terms of assembly, F-type ATPases have 2 components, CF(1) - the catalytic core - and CF(0) - the membrane proton channel. CF(1) has five subunits: alpha(3), beta(3), gamma(1), delta(1), epsilon(1). CF(0) has three main subunits: a(1), b(2) and c(9-12). The alpha and beta chains form an alternating ring which encloses part of the gamma chain. CF(1) is attached to CF(0) by a central stalk formed by the gamma and epsilon chains, while a peripheral stalk is formed by the delta and b chains.

Its subcellular location is the cell inner membrane. Functionally, key component of the proton channel; it plays a direct role in the translocation of protons across the membrane. This chain is ATP synthase subunit a, found in Ehrlichia chaffeensis (strain ATCC CRL-10679 / Arkansas).